Reading from the N-terminus, the 330-residue chain is Protein IN CHLOROPLAST ATPASE BIOGENESIS, chloroplastic (330 aa).

Residues methionine 1 to lysine 35 constitute a chloroplast transit peptide.

In terms of assembly, interacts with ATPC1.

The protein localises to the plastid. The protein resides in the chloroplast stroma. Involved in the assembly of the F(1) ATP synthase in chloroplast thylakoid membranes. Functions downstream of the CPN60 chaperones to promote assembly of the catalytically active core of the chloroplast ATP synthase. Assists the assembly of the ATP synthase gamma subunit into the active F(1) core downstream of CPN60-mediated folding, which is critical for the biogenesis of the chloroplast ATP synthase. The protein is Protein IN CHLOROPLAST ATPASE BIOGENESIS, chloroplastic of Arabidopsis thaliana (Mouse-ear cress).